A 490-amino-acid polypeptide reads, in one-letter code: Mitochondria-eating protein (490 aa).

Residues 112–210 (IRELSSVHES…RILRDEVSFL (99 aa)) are a coiled coil. 2 stretches are compositionally biased toward low complexity: residues 224 to 241 (SRSP…SPVR) and 456 to 490 (RSSS…SSRL). Disordered regions lie at residues 224–253 (SRSP…LTSS) and 455–490 (SRSS…SSRL).

Belongs to the MIEAP family.

The protein resides in the cytoplasm. The protein localises to the mitochondrion outer membrane. It is found in the mitochondrion matrix. Key regulator of mitochondrial quality that mediates the repairing or degradation of unhealthy mitochondria in response to mitochondrial damage. Mediator of mitochondrial protein catabolic process (also named MALM) by mediating the degradation of damaged proteins inside mitochondria by promoting the accumulation in the mitochondrial matrix of hydrolases that are characteristic of the lysosomal lumen. Also involved in mitochondrion degradation of damaged mitochondria by promoting the formation of vacuole-like structures (named MIV), which engulf and degrade unhealthy mitochondria by accumulating lysosomes. Binds cardiolipin. May form molecular condensates (non-membrane-bounded organelles) within mitochondria that compartmentalize and promote cardiolipin metabolism. The protein is Mitochondria-eating protein (spata18) of Danio rerio (Zebrafish).